Consider the following 173-residue polypeptide: Peptide methionine sulfoxide reductase MsrA (173 aa).

Cys-10 is an active-site residue.

Belongs to the MsrA Met sulfoxide reductase family.

It catalyses the reaction L-methionyl-[protein] + [thioredoxin]-disulfide + H2O = L-methionyl-(S)-S-oxide-[protein] + [thioredoxin]-dithiol. It carries out the reaction [thioredoxin]-disulfide + L-methionine + H2O = L-methionine (S)-S-oxide + [thioredoxin]-dithiol. Has an important function as a repair enzyme for proteins that have been inactivated by oxidation. Catalyzes the reversible oxidation-reduction of methionine sulfoxide in proteins to methionine. The polypeptide is Peptide methionine sulfoxide reductase MsrA (Psychrobacter cryohalolentis (strain ATCC BAA-1226 / DSM 17306 / VKM B-2378 / K5)).